Reading from the N-terminus, the 456-residue chain is Signal transduction histidine-protein kinase ArlS (456 aa).

2 helical membrane-spanning segments follow: residues 13–33 (LITT…IIFF) and 157–177 (IVAL…SYIF). An HAMP domain is found at 179–232 (SQITKPIVTMSNKMNQIRRDGFQNKLELTTNYEETDNLIDTFNEMMYQIEESFN). Residues 240 to 456 (DASHELRTPL…TFKISFPVLN (217 aa)) form the Histidine kinase domain. His243 carries the phosphohistidine; by autocatalysis modification.

Post-translationally, autophosphorylated.

The protein localises to the cell membrane. It catalyses the reaction ATP + protein L-histidine = ADP + protein N-phospho-L-histidine.. Functionally, member of the two-component regulatory system ArlS/ArlR. ArlS probably functions as a sensor protein kinase which is autophosphorylated at a histidine residue and transfers its phosphate group to ArlR. The protein is Signal transduction histidine-protein kinase ArlS (arlS) of Staphylococcus epidermidis (strain ATCC 35984 / DSM 28319 / BCRC 17069 / CCUG 31568 / BM 3577 / RP62A).